The primary structure comprises 481 residues: Probable glycine dehydrogenase (decarboxylating) subunit 2 (481 aa).

The residue at position 265 (Lys-265) is an N6-(pyridoxal phosphate)lysine.

The protein belongs to the GcvP family. C-terminal subunit subfamily. The glycine cleavage system is composed of four proteins: P, T, L and H. In this organism, the P 'protein' is a heterodimer of two subunits. Requires pyridoxal 5'-phosphate as cofactor.

The catalysed reaction is N(6)-[(R)-lipoyl]-L-lysyl-[glycine-cleavage complex H protein] + glycine + H(+) = N(6)-[(R)-S(8)-aminomethyldihydrolipoyl]-L-lysyl-[glycine-cleavage complex H protein] + CO2. In terms of biological role, the glycine cleavage system catalyzes the degradation of glycine. The P protein binds the alpha-amino group of glycine through its pyridoxal phosphate cofactor; CO(2) is released and the remaining methylamine moiety is then transferred to the lipoamide cofactor of the H protein. This chain is Probable glycine dehydrogenase (decarboxylating) subunit 2, found in Thermosipho melanesiensis (strain DSM 12029 / CIP 104789 / BI429).